The chain runs to 136 residues: Large ribosomal subunit protein uL16c (136 aa).

This sequence belongs to the universal ribosomal protein uL16 family. As to quaternary structure, part of the 50S ribosomal subunit.

It localises to the plastid. The protein resides in the chloroplast. In Chlamydomonas sp. (strain WXM), this protein is Large ribosomal subunit protein uL16c.